Consider the following 285-residue polypeptide: tRNA uridine(34) hydroxylase (285 aa).

In terms of domain architecture, Rhodanese spans 130 to 225 (RGDDVVFFDG…YGEAFGDTGL (96 aa)). Cysteine 185 functions as the Cysteine persulfide intermediate in the catalytic mechanism.

It belongs to the TrhO family.

The catalysed reaction is uridine(34) in tRNA + AH2 + O2 = 5-hydroxyuridine(34) in tRNA + A + H2O. Its function is as follows. Catalyzes oxygen-dependent 5-hydroxyuridine (ho5U) modification at position 34 in tRNAs. The sequence is that of tRNA uridine(34) hydroxylase from Rhodococcus opacus (strain B4).